The following is a 328-amino-acid chain: Malate dehydrogenase (328 aa).

Residue 11 to 17 (GAAGQIG) participates in NAD(+) binding. Substrate-binding residues include Arg94 and Arg100. Residues Asn107, Gln114, and 131–133 (VGN) each bind NAD(+). Residues Asn133 and Arg164 each contribute to the substrate site. His189 serves as the catalytic Proton acceptor.

Belongs to the LDH/MDH superfamily. MDH type 2 family.

It catalyses the reaction (S)-malate + NAD(+) = oxaloacetate + NADH + H(+). In terms of biological role, catalyzes the reversible oxidation of malate to oxaloacetate. This is Malate dehydrogenase from Xanthomonas axonopodis pv. citri (strain 306).